The chain runs to 506 residues: Maturase K (506 aa).

Belongs to the intron maturase 2 family. MatK subfamily.

It is found in the plastid. The protein resides in the chloroplast. Functionally, usually encoded in the trnK tRNA gene intron. Probably assists in splicing its own and other chloroplast group II introns. This Rhododendron hippophaeoides (Rhododendron) protein is Maturase K.